The chain runs to 377 residues: Alternative oxidase, mitochondrial (377 aa).

A helical transmembrane segment spans residues 149–169 (LSRFIFLESIAAVPGMVAGML). Residues E156, E195, and H198 each coordinate Fe cation. A helical membrane pass occupies residues 214-234 (ILIIGAQGVYFNAMFVAYLIS). Residues E246, E303, and H306 each contribute to the Fe cation site.

This sequence belongs to the alternative oxidase family. The cofactor is Fe cation.

It localises to the mitochondrion inner membrane. In terms of biological role, catalyzes cyanide-resistant oxygen consumption. May increase respiration when the cytochrome respiratory pathway is restricted, or in response to low temperatures. This chain is Alternative oxidase, mitochondrial (AOX1), found in Pyricularia oryzae (strain 70-15 / ATCC MYA-4617 / FGSC 8958) (Rice blast fungus).